An 83-amino-acid chain; its full sequence is Weak toxin DE-1 homolog 1 (83 aa).

Positions 1–21 are cleaved as a signal peptide; it reads MKPVLLTLVVVTIVCLDLGYT. Intrachain disulfides connect Cys-24–Cys-45, Cys-38–Cys-62, Cys-64–Cys-75, and Cys-76–Cys-81.

It belongs to the three-finger toxin family. Short-chain subfamily. Type I alpha-neurotoxin sub-subfamily. In terms of tissue distribution, expressed by the venom gland.

It localises to the secreted. Binds to muscle nicotinic acetylcholine receptor (nAChR) and inhibit acetylcholine from binding to the receptor, thereby impairing neuromuscular transmission. The chain is Weak toxin DE-1 homolog 1 from Ophiophagus hannah (King cobra).